The primary structure comprises 223 residues: UPF0502 protein Sbal_1765 (223 aa).

The protein belongs to the UPF0502 family.

This is UPF0502 protein Sbal_1765 from Shewanella baltica (strain OS155 / ATCC BAA-1091).